The sequence spans 181 residues: Oligoribonuclease (181 aa).

In terms of domain architecture, Exonuclease spans 8–171; that stretch reads LIWLDLEMTG…DDIKDSIMEL (164 aa). The active site involves tyrosine 129.

It belongs to the oligoribonuclease family.

It localises to the cytoplasm. 3'-to-5' exoribonuclease specific for small oligoribonucleotides. This chain is Oligoribonuclease, found in Pseudoalteromonas translucida (strain TAC 125).